A 180-amino-acid chain; its full sequence is Peptide deformylase (180 aa).

Fe cation-binding residues include cysteine 88 and histidine 130. Residue glutamate 131 is part of the active site. Position 134 (histidine 134) interacts with Fe cation.

The protein belongs to the polypeptide deformylase family. Fe(2+) serves as cofactor.

It carries out the reaction N-terminal N-formyl-L-methionyl-[peptide] + H2O = N-terminal L-methionyl-[peptide] + formate. In terms of biological role, removes the formyl group from the N-terminal Met of newly synthesized proteins. Requires at least a dipeptide for an efficient rate of reaction. N-terminal L-methionine is a prerequisite for activity but the enzyme has broad specificity at other positions. The sequence is that of Peptide deformylase from Acidothermus cellulolyticus (strain ATCC 43068 / DSM 8971 / 11B).